Here is a 326-residue protein sequence, read N- to C-terminus: Undecaprenyl-diphosphatase (326 aa).

The next 9 helical transmembrane spans lie at 11-31 (AFSLSVAIAVVYHQAWGIAVA), 42-62 (TGVISNGISINLFQAFVLGFI), 90-110 (GVAFTAVIQLGSIGAVFWYFW), 138-158 (LGIGLGTIPIVFFGLLMKLLV), 165-185 (FFRSLSTIAIASIVMALLLAL), 212-232 (ALALIPGVSRSGSTLTAGLFI), 242-262 (FSFLLGIPAITIAGLVELKGL), 272-292 (ILPLIVGTISSAVFSYLAIAW), and 304-324 (IFVWYRLIFGVVILTALGMGF).

The protein belongs to the UppP family.

Its subcellular location is the cell inner membrane. It carries out the reaction di-trans,octa-cis-undecaprenyl diphosphate + H2O = di-trans,octa-cis-undecaprenyl phosphate + phosphate + H(+). Its function is as follows. Catalyzes the dephosphorylation of undecaprenyl diphosphate (UPP). Confers resistance to bacitracin. This chain is Undecaprenyl-diphosphatase, found in Synechocystis sp. (strain ATCC 27184 / PCC 6803 / Kazusa).